The following is a 313-amino-acid chain: Small glutamine-rich tetratricopeptide repeat-containing protein alpha (313 aa).

Residues 66–100 are disordered; the sequence is ATGKEMPQDLRSPARTPPSEEDSAEAERLKTEGNE. At Ser77 the chain carries Phosphoserine. Thr81 carries the phosphothreonine modification. Ser84 carries the phosphoserine modification. The segment covering 90 to 100 has biased composition (basic and acidic residues); that stretch reads EAERLKTEGNE. TPR repeat units follow at residues 91-124, 125-158, and 159-192; these read AERLKTEGNEQMKVENFEAAVHFYGKAIELNPAN, AVYFCNRAAAYSKLGNYAGAVQDCERAICIDPAY, and SKAYGRMGLALSSLNKHVEAVAYYKKALELDPDN. At Lys137 the chain carries N6-acetyllysine. Residues 250–269 are disordered; it reads MISGGNNPLGTPGTSPSQND. The residue at position 301 (Ser301) is a Phosphoserine. Thr303 is subject to Phosphothreonine. Phosphoserine is present on Ser305.

Belongs to the SGT family. Homodimer. Homooligomer. Interacts with DNAJC5 and DNAJC5B. Interacts (via TPR repeats) with HSP90AA1. Interacts (via Gln-rich region) with SLC2A1. Interacts with HSP90AB1. Interacts (via TPR repeats) with HSPA8/Hsc70; the interaction is direct. Interacts with BAG6 (via ubiquitin-like domain); interaction prevents interaction between BAG6 and RNF126. Forms a multiprotein complex, at least composed of DNAJB12, DNAJB14, HSPA8/Hsc70 and SGTA; interaction with DNAJB14 and HSPA8/Hsc70 is direct. In terms of assembly, (Microbial infection) Interacts with Vpu and Gag from HIV-1. As to quaternary structure, (Microbial infection) Interacts with SARS-CoV accessory protein 7a. In terms of tissue distribution, ubiquitous.

It localises to the cytoplasm. Its subcellular location is the nucleus. Functionally, co-chaperone that binds misfolded and hydrophobic patches-containing client proteins in the cytosol. Mediates their targeting to the endoplasmic reticulum but also regulates their sorting to the proteasome when targeting fails. Functions in tail-anchored/type II transmembrane proteins membrane insertion constituting with ASNA1 and the BAG6 complex a targeting module. Functions upstream of the BAG6 complex and ASNA1, binding more rapidly the transmembrane domain of newly synthesized proteins. It is also involved in the regulation of the endoplasmic reticulum-associated misfolded protein catabolic process via its interaction with BAG6: collaborates with the BAG6 complex to maintain hydrophobic substrates in non-ubiquitinated states. Competes with RNF126 for interaction with BAG6, preventing the ubiquitination of client proteins associated with the BAG6 complex. Binds directly to HSC70 and HSP70 and regulates their ATPase activity. (Microbial infection) In case of infection by polyomavirus, involved in the virus endoplasmic reticulum membrane penetration and infection via interaction with DNAJB12, DNAJB14 and HSPA8/Hsc70. The chain is Small glutamine-rich tetratricopeptide repeat-containing protein alpha (SGTA) from Homo sapiens (Human).